Reading from the N-terminus, the 418-residue chain is Sterigmatocystin 8-O-methyltransferase (418 aa).

Residues 1–41 (MALPSKAALVGLANTLSEQVKRYLATAGETKSPEDHKLCIE) constitute a propeptide that is removed on maturation. 170 to 176 (MRSGASF) contacts substrate. Residues 206–225 (LFDYYSTVDEVRGRRFDLGM) are substrate binding. S-adenosyl-L-methionine-binding positions include 254–255 (GG), Asp277, 297–298 (DI), and Arg313. His317 (proton acceptor) is an active-site residue.

The protein belongs to the class I-like SAM-binding methyltransferase superfamily. Cation-independent O-methyltransferase family. COMT subfamily.

It is found in the cytoplasm. It localises to the vacuole. The catalysed reaction is sterigmatocystin + S-adenosyl-L-methionine = 8-O-methylsterigmatocystin + S-adenosyl-L-homocysteine + H(+). The enzyme catalyses dihydrosterigmatocystin + S-adenosyl-L-methionine = 8-O-methyldihydrosterigmatocystin + S-adenosyl-L-homocysteine + H(+). It participates in mycotoxin biosynthesis; aflatoxin biosynthesis. In terms of biological role, sterigmatocystin 8-O-methyltransferase; part of the gene cluster that mediates the biosynthesis of aflatoxins, a group of polyketide-derived furanocoumarins, and part of the most toxic and carcinogenic compounds among the known mycotoxins. The four major aflatoxins produced by A.parasiticus are aflatoxin B1 (AFB1), aflatoxin B2 (AFB2), aflatoxin G1 (AFG1) and aflatoxin G2 (AFG2). Within the aflatoxin pathway, the O-methyltransferase aflP uses both sterigmatocystin (ST) and dihydrosterigmatocystin (DHST) as substrates to yield O-methylsterigmatocystin (OMST) and dihydro-O-methylsterigmatocystin (DHOMST), respectively. The biosynthesis of aflatoxins begins with the norsolorinic acid synthase aflC that combines a hexanoyl starter unit produced by the fatty acid synthase aflA/aflB and 7 malonyl-CoA extender units to synthesize the precursor NOR. The second step is the conversion of NOR to averantin and requires the norsolorinic acid ketoreductase aflD, which catalyzes the dehydration of norsolorinic acid to form (1'S)-averantin. The norsolorinic acid reductases aflE and aflF may also play a role in the conversion of NOR to AVN. The cytochrome P450 monooxygenase aflG then catalyzes the hydroxylation of AVN to 5'hydroxyaverantin (HAVN). The next step is performed by the 5'-hydroxyaverantin dehydrogenase aflH that transforms HAVN to 5'-oxoaverantin (OAVN) which is further converted to averufin (AVF) by aflK that plays a dual role in the pathway, as a 5'-oxoaverantin cyclase that mediates conversion of 5'-oxoaverantin, as well as a versicolorin B synthase in a later step in the pathway. The averufin oxidase aflI catalyzes the conversion of AVF to versiconal hemiacetal acetate (VHA). VHA is then the substrate for the versiconal hemiacetal acetate esterase aflJ to yield versiconal (VAL). Versicolorin B synthase aflK then converts VAL to versicolorin B (VERB) by closing the bisfuran ring of aflatoxin which is required for DNA-binding, thus giving to aflatoxin its activity as a mutagen. Then, the activity of the versicolorin B desaturase aflL leads to versicolorin A (VERA). A branch point starts from VERB since it can also be converted to dihydrodemethylsterigmatocystin (DMDHST), probably also by aflL, VERA being a precursor for aflatoxins B1 and G1, and DMDHST for aflatoxins B2 and G2. Next, the versicolorin reductase aflM and the cytochrome P450 monooxygenase aflN are involved in conversion of VERA to demethylsterigmatocystin (DMST). AflX and aflY seem also involved in this step, through probable aflX-mediated epoxide ring-opening step following versicolorin A oxidation and aflY-mediated Baeyer-Villiger oxidation required for the formation of the xanthone ring. The methyltransferase aflO then leads to the modification of DMST to sterigmatocystin (ST), and of DMDHST to dihydrosterigmatocystin (DHST). Both ST and DHST are then substrates of the O-methyltransferase aflP to yield O-methylsterigmatocystin (OMST) and dihydro-O-methylsterigmatocystin (DHOMST), respectively. Finally OMST is converted to aflatoxins B1 and G1, and DHOMST to aflatoxins B2 and G2, via the action of several enzymes including O-methylsterigmatocystin oxidoreductase aflQ, the cytochrome P450 monooxygenase aflU, but also the NADH-dependent flavin oxidoreductase nadA which is specifically required for the synthesis of AFG1. The chain is Sterigmatocystin 8-O-methyltransferase from Aspergillus parasiticus (strain ATCC 56775 / NRRL 5862 / SRRC 143 / SU-1).